We begin with the raw amino-acid sequence, 349 residues long: NADH-quinone oxidoreductase subunit H (349 aa).

8 helical membrane passes run 20 to 42 (WTLI…LTYF), 88 to 108 (GIFI…WAVV), 123 to 143 (LLYI…SGWA), 167 to 187 (MGFS…VEIV), 202 to 222 (FLSW…ISGV), 249 to 269 (GMAF…VSAL), 284 to 304 (FLPD…FLFL), and 325 to 345 (VFVP…MSPL).

Belongs to the complex I subunit 1 family. As to quaternary structure, NDH-1 is composed of 14 different subunits. Subunits NuoA, H, J, K, L, M, N constitute the membrane sector of the complex.

It is found in the cell inner membrane. It carries out the reaction a quinone + NADH + 5 H(+)(in) = a quinol + NAD(+) + 4 H(+)(out). In terms of biological role, NDH-1 shuttles electrons from NADH, via FMN and iron-sulfur (Fe-S) centers, to quinones in the respiratory chain. The immediate electron acceptor for the enzyme in this species is believed to be ubiquinone. Couples the redox reaction to proton translocation (for every two electrons transferred, four hydrogen ions are translocated across the cytoplasmic membrane), and thus conserves the redox energy in a proton gradient. This subunit may bind ubiquinone. The chain is NADH-quinone oxidoreductase subunit H from Dechloromonas aromatica (strain RCB).